A 440-amino-acid chain; its full sequence is Protein scalloped (440 aa).

A disordered region spans residues 32–65; that stretch reads TEQQAVGPGTIPSPWTPVNAGPPGALGSADTNGS. The TEA DNA-binding region spans 86 to 162; the sequence is SADAEGVWSP…QVLARRKLRE (77 aa).

In terms of assembly, the C-terminus of sd interacts with the C-terminal serine-rich protein domain of vg, to form a complex which acts as a selector for wing development. Interacts (via C-terminus) with yki (via N-terminus) and this interaction enhances its transcriptional activity. As to expression, subset of neuroblasts in the central nervous system and in the peripheral sense organs of the embryo. Expressed in the developing wing primordia initially along the D/V wing boundary, and by the late third larval instar, maximal expression is seen in cells at the D/V wing disk boundary. Less expression in cells located farther from this boundary. Also expressed in wing progenitor cells.

The protein localises to the nucleus. In terms of biological role, transcription factor which plays a key role in the Hippo/SWH (Sav/Wts/Hpo) signaling pathway, a signaling pathway that plays a pivotal role in organ size control and tumor suppression by restricting proliferation and promoting apoptosis. The core of this pathway is composed of a kinase cascade wherein Hippo (Hpo), in complex with its regulatory protein Salvador (Sav), phosphorylates and activates Warts (Wts) in complex with its regulatory protein Mats, which in turn phosphorylates and inactivates the Yorkie (Yki) oncoprotein. The Hippo/SWH signaling pathway inhibits the activity of the transcriptional complex formed by Scalloped (sd) and Yki and the target genes of this pathway include cyclin-E (cycE), diap1 and bantam. Sd promotes nuclear localization of Yki. Involved in the regulation of cell-specific gene expression during development, particularly in the differentiation of the nervous system. When in combination with vestigial (vg) it acts as a transcriptional activation complex that regulates gene expression in the wing. Binding to vg switches the DNA target selectivity of sd. Required autonomously for cell proliferation and viability within the wing blade. Required for proper sensory organ precursor (SOP) differentiation at the wing margin; required for correct expression of sens. The chain is Protein scalloped (sd) from Drosophila melanogaster (Fruit fly).